A 408-amino-acid chain; its full sequence is Putative UPF0496 protein 2 (408 aa).

2 consecutive transmembrane segments (helical) span residues 224–244 (RIAR…AIVA) and 252–272 (ALVG…GAAR). The disordered stretch occupies residues 385 to 408 (MARGLPPPSPATVTTTSEERLTSS).

Belongs to the UPF0496 family.

Its subcellular location is the membrane. The polypeptide is Putative UPF0496 protein 2 (Oryza sativa subsp. japonica (Rice)).